Consider the following 141-residue polypeptide: Hemoglobin subunit alpha-2 (141 aa).

At Ser1 the chain carries N-acetylserine. The Globin domain maps to 1–141; the sequence is SLSTKDKETV…LARALSEKYR (141 aa). His59 is an O2 binding site. His88 lines the heme b pocket.

This sequence belongs to the globin family. In terms of assembly, hb2 is a heterotetramer of two alpha-2 chains and two beta chains. In terms of tissue distribution, red blood cells.

In terms of biological role, involved in oxygen transport from gills to the various peripheral tissues. This is Hemoglobin subunit alpha-2 (hba2) from Notothenia angustata (Rockcod).